A 287-amino-acid polypeptide reads, in one-letter code: Ribonuclease Z (287 aa).

Residues H64, H66, D68, H69, H124, D191, and H250 each coordinate Zn(2+). D68 serves as the catalytic Proton acceptor.

The protein belongs to the RNase Z family. In terms of assembly, homodimer. Zn(2+) serves as cofactor.

The catalysed reaction is Endonucleolytic cleavage of RNA, removing extra 3' nucleotides from tRNA precursor, generating 3' termini of tRNAs. A 3'-hydroxy group is left at the tRNA terminus and a 5'-phosphoryl group is left at the trailer molecule.. Its function is as follows. Zinc phosphodiesterase, which displays some tRNA 3'-processing endonuclease activity. Probably involved in tRNA maturation, by removing a 3'-trailer from precursor tRNA. The protein is Ribonuclease Z of Pyrobaculum neutrophilum (strain DSM 2338 / JCM 9278 / NBRC 100436 / V24Sta) (Thermoproteus neutrophilus).